We begin with the raw amino-acid sequence, 141 residues long: MAKKVVGMIKLQLPAGKATPAPPVGPALGQHGVNIMGFCKEFNAKTVKQEGLIIPVVITVYQDRSFSFVLKTPPAAVLLKKAAGIESGSGVPNKTKVAKVTEEQVKQIAETKMVDLNASSVETAMKMIAGTARSMGITIEG.

It belongs to the universal ribosomal protein uL11 family. As to quaternary structure, part of the ribosomal stalk of the 50S ribosomal subunit. Interacts with L10 and the large rRNA to form the base of the stalk. L10 forms an elongated spine to which L12 dimers bind in a sequential fashion forming a multimeric L10(L12)X complex. One or more lysine residues are methylated.

Forms part of the ribosomal stalk which helps the ribosome interact with GTP-bound translation factors. This Clostridium kluyveri (strain ATCC 8527 / DSM 555 / NBRC 12016 / NCIMB 10680 / K1) protein is Large ribosomal subunit protein uL11.